Reading from the N-terminus, the 168-residue chain is Anti-sigma-F factor RsbW (168 aa).

The interval 1–31 (MTDQLEDQTQGGSTVDRSLPGGCMADSDLPT) is disordered. A compositionally biased stretch (polar residues) spans 7–16 (DQTQGGSTVD). 124–128 (PGSFS) is an ATP binding site.

This sequence belongs to the anti-sigma-factor family. Homodimer.

In terms of biological role, a cognate anti-sigma factor for alternative sigma factor SigF. Alternative sigma factors are held in an inactive form by an anti-sigma factor. Binds ATP and GTP, may hydrolyze both. This Mycobacterium tuberculosis (strain CDC 1551 / Oshkosh) protein is Anti-sigma-F factor RsbW (rsbW).